Reading from the N-terminus, the 299-residue chain is ATP phosphoribosyltransferase (299 aa).

The protein belongs to the ATP phosphoribosyltransferase family. Long subfamily. In terms of assembly, equilibrium between an active dimeric form, an inactive hexameric form and higher aggregates. Interconversion between the various forms is largely reversible and is influenced by the natural substrates and inhibitors of the enzyme. Mg(2+) is required as a cofactor.

Its subcellular location is the cytoplasm. The catalysed reaction is 1-(5-phospho-beta-D-ribosyl)-ATP + diphosphate = 5-phospho-alpha-D-ribose 1-diphosphate + ATP. It functions in the pathway amino-acid biosynthesis; L-histidine biosynthesis; L-histidine from 5-phospho-alpha-D-ribose 1-diphosphate: step 1/9. Its activity is regulated as follows. Feedback inhibited by histidine. Functionally, catalyzes the condensation of ATP and 5-phosphoribose 1-diphosphate to form N'-(5'-phosphoribosyl)-ATP (PR-ATP). Has a crucial role in the pathway because the rate of histidine biosynthesis seems to be controlled primarily by regulation of HisG enzymatic activity. In Escherichia coli O17:K52:H18 (strain UMN026 / ExPEC), this protein is ATP phosphoribosyltransferase.